A 536-amino-acid chain; its full sequence is Phosphoenolpyruvate carboxykinase (ATP) (536 aa).

Substrate contacts are provided by R61, Y195, and K201. ATP-binding positions include K201, H220, and 236 to 244 (GLSGTGKTT). Mn(2+) contacts are provided by K201 and H220. D257 contributes to the Mn(2+) binding site. Residues E285, R322, and T447 each contribute to the ATP site. A substrate-binding site is contributed by R322.

It belongs to the phosphoenolpyruvate carboxykinase (ATP) family. Mn(2+) serves as cofactor.

The protein localises to the cytoplasm. The catalysed reaction is oxaloacetate + ATP = phosphoenolpyruvate + ADP + CO2. It functions in the pathway carbohydrate biosynthesis; gluconeogenesis. In terms of biological role, involved in the gluconeogenesis. Catalyzes the conversion of oxaloacetate (OAA) to phosphoenolpyruvate (PEP) through direct phosphoryl transfer between the nucleoside triphosphate and OAA. The protein is Phosphoenolpyruvate carboxykinase (ATP) of Agrobacterium fabrum (strain C58 / ATCC 33970) (Agrobacterium tumefaciens (strain C58)).